A 257-amino-acid chain; its full sequence is Imidazole glycerol phosphate synthase subunit HisF (257 aa).

Residues D11 and D130 contribute to the active site.

Belongs to the HisA/HisF family. As to quaternary structure, heterodimer of HisH and HisF.

The protein resides in the cytoplasm. It carries out the reaction 5-[(5-phospho-1-deoxy-D-ribulos-1-ylimino)methylamino]-1-(5-phospho-beta-D-ribosyl)imidazole-4-carboxamide + L-glutamine = D-erythro-1-(imidazol-4-yl)glycerol 3-phosphate + 5-amino-1-(5-phospho-beta-D-ribosyl)imidazole-4-carboxamide + L-glutamate + H(+). Its pathway is amino-acid biosynthesis; L-histidine biosynthesis; L-histidine from 5-phospho-alpha-D-ribose 1-diphosphate: step 5/9. In terms of biological role, IGPS catalyzes the conversion of PRFAR and glutamine to IGP, AICAR and glutamate. The HisF subunit catalyzes the cyclization activity that produces IGP and AICAR from PRFAR using the ammonia provided by the HisH subunit. The sequence is that of Imidazole glycerol phosphate synthase subunit HisF from Aeromonas salmonicida (strain A449).